A 472-amino-acid chain; its full sequence is 3-isopropylmalate dehydratase large subunit (472 aa).

3 residues coordinate [4Fe-4S] cluster: C352, C413, and C416.

It belongs to the aconitase/IPM isomerase family. LeuC type 1 subfamily. As to quaternary structure, heterodimer of LeuC and LeuD. Requires [4Fe-4S] cluster as cofactor.

The enzyme catalyses (2R,3S)-3-isopropylmalate = (2S)-2-isopropylmalate. It participates in amino-acid biosynthesis; L-leucine biosynthesis; L-leucine from 3-methyl-2-oxobutanoate: step 2/4. Catalyzes the isomerization between 2-isopropylmalate and 3-isopropylmalate, via the formation of 2-isopropylmaleate. The sequence is that of 3-isopropylmalate dehydratase large subunit from Laribacter hongkongensis (strain HLHK9).